The primary structure comprises 311 residues: MIKLLFMGTPQFSATVLKGLLDNPAYEILGVVTQPDRAVGRKKDIKVTPVKQLALEHGISIYQPEKLSGSQELIEIMGLGADGIITAAFGQFLPTILLDSVSFAINVHASLLPKYRGGAPIHYAIMNGDKEAGVTIMEMIKEMDAGDMVAKASTPILETDNVGTLFEKLAIIGRDLLLDSLPAYLSGELKPIPQDHSQATFSPNISPEQEKLDWTMFNQEVFNHIRGMNPWPVAHTFLEGQRLKIYEAQLAEGEGLPGQVIVKTKKSLVIATGQGALSLIVVQPAGKPKMSIIDFLNGIGRKLEVGDIIGR.

110 to 113 (SLLP) is a (6S)-5,6,7,8-tetrahydrofolate binding site.

This sequence belongs to the Fmt family.

The enzyme catalyses L-methionyl-tRNA(fMet) + (6R)-10-formyltetrahydrofolate = N-formyl-L-methionyl-tRNA(fMet) + (6S)-5,6,7,8-tetrahydrofolate + H(+). Functionally, attaches a formyl group to the free amino group of methionyl-tRNA(fMet). The formyl group appears to play a dual role in the initiator identity of N-formylmethionyl-tRNA by promoting its recognition by IF2 and preventing the misappropriation of this tRNA by the elongation apparatus. The sequence is that of Methionyl-tRNA formyltransferase from Streptococcus pyogenes serotype M3 (strain ATCC BAA-595 / MGAS315).